A 119-amino-acid chain; its full sequence is Small ribosomal subunit protein bS6 (119 aa).

The interval 99-119 (KKEKKQSRKEEGSENSEKVEE) is disordered.

Belongs to the bacterial ribosomal protein bS6 family.

In terms of biological role, binds together with bS18 to 16S ribosomal RNA. This Thermosipho melanesiensis (strain DSM 12029 / CIP 104789 / BI429) protein is Small ribosomal subunit protein bS6.